The primary structure comprises 883 residues: NF-X1-type zinc finger protein NFXL2 (883 aa).

Over residues 1–10 (MTNMAGTATT) the composition is skewed to polar residues. Residues 1–44 (MTNMAGTATTEFRWKSPPQPPSQEQPISDSDSDSGSDSENHQHR) are disordered. The RING-type; degenerate zinc finger occupies 87-152 (CLICLERIKR…EAVWNCPKCR (66 aa)). 11 consecutive NF-X1-type zinc fingers follow at residues 198–216 (CGHC…SCPK), 250–269 (CNIH…PCRE), 303–322 (CGKH…LCPY), 357–377 (CGYH…TCRI), 410–429 (CARH…PCSE), 437–456 (CRNH…PCPI), 494–515 (CRHG…PCRL), 523–568 (CGHK…RCPE), 605–636 (CGNH…KCDL), 646–664 (CQHP…PCKT), and 709–738 (CTHL…RCKC). The segment at 798 to 824 (EIEEKEEPSGKNASKRRKRRGRGQDIQ) is disordered. The helical transmembrane segment at 841–863 (MVVMLVAMLAAVSYYGYKGLLWL) threads the bilayer.

Belongs to the NFX1 family. As to quaternary structure, interacts with ADO1/ZTL. Constitutively expressed in mesophyll and guard cells.

Its subcellular location is the nucleus. The protein localises to the membrane. The protein operates within protein modification; protein ubiquitination. In terms of biological role, probable transcriptional regulator. May mediate E2- or E3-dependent ubiquitination. Required to gate light sensitivity during the night. Regulates the speed of the clock by acting in the feedback loop between CCA1, LHY and APRR1/TOC1. Promotes the expression of CCA1 at night but not by days. This activational effect is enhanced by interaction with ADO1/ZTL. Association with ADO1/ZTL is not leading to the degradation of NFXL2. Confers sensitivity to osmotic stress such as high salinity. Prevents H(2)O(2) production and abscisic acid accumulation. Part of a regulatory network that integrates the biosynthesis and action of abscisic acid, reactive oxygen species and cuticle components. The protein is NF-X1-type zinc finger protein NFXL2 (NFXL2) of Arabidopsis thaliana (Mouse-ear cress).